The chain runs to 291 residues: ATP synthase gamma chain (291 aa).

Belongs to the ATPase gamma chain family. In terms of assembly, F-type ATPases have 2 components, CF(1) - the catalytic core - and CF(0) - the membrane proton channel. CF(1) has five subunits: alpha(3), beta(3), gamma(1), delta(1), epsilon(1). CF(0) has three main subunits: a, b and c.

The protein localises to the cell membrane. Functionally, produces ATP from ADP in the presence of a proton gradient across the membrane. The gamma chain is believed to be important in regulating ATPase activity and the flow of protons through the CF(0) complex. This Streptococcus pyogenes serotype M49 (strain NZ131) protein is ATP synthase gamma chain.